Reading from the N-terminus, the 463-residue chain is UDP-N-acetylmuramate--L-alanine ligase (463 aa).

112–118 provides a ligand contact to ATP; that stretch reads GTHGKTT.

This sequence belongs to the MurCDEF family.

It localises to the cytoplasm. It carries out the reaction UDP-N-acetyl-alpha-D-muramate + L-alanine + ATP = UDP-N-acetyl-alpha-D-muramoyl-L-alanine + ADP + phosphate + H(+). Its pathway is cell wall biogenesis; peptidoglycan biosynthesis. Its function is as follows. Cell wall formation. This Dechloromonas aromatica (strain RCB) protein is UDP-N-acetylmuramate--L-alanine ligase.